The following is a 178-amino-acid chain: Ribulose bisphosphate carboxylase small subunit, chloroplastic (178 aa).

Residues 1 to 54 (MALISSAAVTTINRAPVQANLATPFTGLKSSAGFPVTKKNNDITSITSNGSRVN) constitute a chloroplast transit peptide.

Belongs to the RuBisCO small chain family. In terms of assembly, heterohexadecamer of 8 large and 8 small subunits.

Its subcellular location is the plastid. It is found in the chloroplast. Its function is as follows. RuBisCO catalyzes two reactions: the carboxylation of D-ribulose 1,5-bisphosphate, the primary event in carbon dioxide fixation, as well as the oxidative fragmentation of the pentose substrate. Both reactions occur simultaneously and in competition at the same active site. Although the small subunit is not catalytic it is essential for maximal activity. The polypeptide is Ribulose bisphosphate carboxylase small subunit, chloroplastic (Trifolium repens (Creeping white clover)).